Consider the following 323-residue polypeptide: Phosphatidylglycerol--prolipoprotein diacylglyceryl transferase (323 aa).

The next 3 helical transmembrane spans lie at 15-35, 58-78, and 106-126; these read VIQG…ILIS, FMFS…TLVY, and GMAI…TINT. Arg156 is an a 1,2-diacyl-sn-glycero-3-phospho-(1'-sn-glycerol) binding site. The next 2 helical transmembrane spans lie at 242 to 262 and 289 to 309; these read GFIF…IEYL and ISMG…WIIV.

Belongs to the Lgt family.

It localises to the cell inner membrane. It catalyses the reaction L-cysteinyl-[prolipoprotein] + a 1,2-diacyl-sn-glycero-3-phospho-(1'-sn-glycerol) = an S-1,2-diacyl-sn-glyceryl-L-cysteinyl-[prolipoprotein] + sn-glycerol 1-phosphate + H(+). It functions in the pathway protein modification; lipoprotein biosynthesis (diacylglyceryl transfer). Functionally, catalyzes the transfer of the diacylglyceryl group from phosphatidylglycerol to the sulfhydryl group of the N-terminal cysteine of a prolipoprotein, the first step in the formation of mature lipoproteins. The polypeptide is Phosphatidylglycerol--prolipoprotein diacylglyceryl transferase (Borreliella afzelii (strain PKo) (Borrelia afzelii)).